Here is a 236-residue protein sequence, read N- to C-terminus: Orotidine 5'-phosphate decarboxylase (236 aa).

Substrate contacts are provided by residues Asp-11, Lys-33, 60 to 69 (DLKLHDIPNT), Thr-119, Arg-181, Gln-190, Gly-210, and Arg-211. Lys-62 serves as the catalytic Proton donor.

Belongs to the OMP decarboxylase family. Type 1 subfamily. In terms of assembly, homodimer.

The enzyme catalyses orotidine 5'-phosphate + H(+) = UMP + CO2. It functions in the pathway pyrimidine metabolism; UMP biosynthesis via de novo pathway; UMP from orotate: step 2/2. In terms of biological role, catalyzes the decarboxylation of orotidine 5'-monophosphate (OMP) to uridine 5'-monophosphate (UMP). This is Orotidine 5'-phosphate decarboxylase from Cutibacterium acnes (strain DSM 16379 / KPA171202) (Propionibacterium acnes).